The following is a 412-amino-acid chain: Multifunctional CCA protein (412 aa).

ATP-binding residues include Gly-8 and Arg-11. Gly-8 and Arg-11 together coordinate CTP. Positions 21 and 23 each coordinate Mg(2+). ATP-binding residues include Arg-91, Arg-137, and Arg-140. CTP is bound by residues Arg-91, Arg-137, and Arg-140. In terms of domain architecture, HD spans Thr-228–Trp-329.

It belongs to the tRNA nucleotidyltransferase/poly(A) polymerase family. Bacterial CCA-adding enzyme type 1 subfamily. Monomer. Can also form homodimers and oligomers. Mg(2+) is required as a cofactor. Requires Ni(2+) as cofactor.

The enzyme catalyses a tRNA precursor + 2 CTP + ATP = a tRNA with a 3' CCA end + 3 diphosphate. The catalysed reaction is a tRNA with a 3' CCA end + 2 CTP + ATP = a tRNA with a 3' CCACCA end + 3 diphosphate. Its function is as follows. Catalyzes the addition and repair of the essential 3'-terminal CCA sequence in tRNAs without using a nucleic acid template. Adds these three nucleotides in the order of C, C, and A to the tRNA nucleotide-73, using CTP and ATP as substrates and producing inorganic pyrophosphate. tRNA 3'-terminal CCA addition is required both for tRNA processing and repair. Also involved in tRNA surveillance by mediating tandem CCA addition to generate a CCACCA at the 3' terminus of unstable tRNAs. While stable tRNAs receive only 3'-terminal CCA, unstable tRNAs are marked with CCACCA and rapidly degraded. In Shigella sonnei (strain Ss046), this protein is Multifunctional CCA protein.